Consider the following 123-residue polypeptide: MALTKEDIINAVAEMSVMDVVELISAMEEKFGVSAAAAVAAGPAADAGVAAEEQTEFDVVLTAAGDKKVNVIKAVRAATGLGLKEAKAIVDGAPMTVKEAASKEDAAALKAALEEAGASVEIK.

The protein belongs to the bacterial ribosomal protein bL12 family. Homodimer. Part of the ribosomal stalk of the 50S ribosomal subunit. Forms a multimeric L10(L12)X complex, where L10 forms an elongated spine to which 2 to 4 L12 dimers bind in a sequential fashion. Binds GTP-bound translation factors.

Forms part of the ribosomal stalk which helps the ribosome interact with GTP-bound translation factors. Is thus essential for accurate translation. The chain is Large ribosomal subunit protein bL12 from Marinomonas sp. (strain MWYL1).